The chain runs to 434 residues: MNAVLENIENSEARFRFTIDYKVFADALEKTYRKNKKNYQVAGFRKGNVPRSVIESQYGPTVFYQEALDLIMTEEYKKAVESLALNTIGDPDIEVGEIEKGQELSVKASVPVVPEVTLGQLEGIEVVMPKAREVKERDIDKVLEELQYKNKKITDKEIAPAEKGDTVTVDYDCELDGTKFEPVVDYKALLDDSSDTMGFEGQLEGAQKGDILDIKKVLPHDHPQPQIAGKTACFKVTVKKVERIEILPLDDAFAQKVGNVSTMEEFRAEIKKNLEQAAAQRVQMQRNNAILSELFKRCQVKIPESLIMQRAMSMLEQFSGQLEAEGGTLDLYLQLINKKSGDFKREVWEDAENSLKADYILDKIIKEKGYTVSEEELNQGCEKFALSINMSPENARQKLGPLVHKVEHDLKAEKAFQYLLEHAVIREDNGDKTA.

Positions 164–247 (GDTVTVDYDC…VKKVERIEIL (84 aa)) constitute a PPIase FKBP-type domain.

Belongs to the FKBP-type PPIase family. Tig subfamily.

It is found in the cytoplasm. The enzyme catalyses [protein]-peptidylproline (omega=180) = [protein]-peptidylproline (omega=0). In terms of biological role, involved in protein export. Acts as a chaperone by maintaining the newly synthesized protein in an open conformation. Functions as a peptidyl-prolyl cis-trans isomerase. This is Trigger factor 2 from Desulfitobacterium hafniense (strain Y51).